A 282-amino-acid polypeptide reads, in one-letter code: Probable phosphatase C1620.13 (282 aa).

The active-site Tele-phosphohistidine intermediate is H61. The Proton donor/acceptor role is filled by E135.

This sequence belongs to the phosphoglycerate mutase family. BPG-dependent PGAM subfamily.

The protein resides in the nucleus. This Schizosaccharomyces pombe (strain 972 / ATCC 24843) (Fission yeast) protein is Probable phosphatase C1620.13.